The following is a 295-amino-acid chain: Protease HtpX (295 aa).

Transmembrane regions (helical) follow at residues 4-24 and 41-61; these read ILLF…TLSL and SSLL…SLFI. His147 contributes to the Zn(2+) binding site. Glu148 is a catalytic residue. Residue His151 coordinates Zn(2+). 2 consecutive transmembrane segments (helical) span residues 158–178 and 199–219; these read VTLA…ARII and VATI…VMWF. Zn(2+) is bound at residue Glu224.

It belongs to the peptidase M48B family. Zn(2+) serves as cofactor.

The protein resides in the cell inner membrane. This Pseudomonas putida (strain ATCC 700007 / DSM 6899 / JCM 31910 / BCRC 17059 / LMG 24140 / F1) protein is Protease HtpX.